The chain runs to 234 residues: 1-(5-phosphoribosyl)-5-[(5-phosphoribosylamino)methylideneamino] imidazole-4-carboxamide isomerase (234 aa).

Aspartate 9 functions as the Proton acceptor in the catalytic mechanism. The active-site Proton donor is aspartate 131.

The protein belongs to the HisA/HisF family.

It is found in the cytoplasm. The catalysed reaction is 1-(5-phospho-beta-D-ribosyl)-5-[(5-phospho-beta-D-ribosylamino)methylideneamino]imidazole-4-carboxamide = 5-[(5-phospho-1-deoxy-D-ribulos-1-ylimino)methylamino]-1-(5-phospho-beta-D-ribosyl)imidazole-4-carboxamide. Its pathway is amino-acid biosynthesis; L-histidine biosynthesis; L-histidine from 5-phospho-alpha-D-ribose 1-diphosphate: step 4/9. In Staphylococcus carnosus (strain TM300), this protein is 1-(5-phosphoribosyl)-5-[(5-phosphoribosylamino)methylideneamino] imidazole-4-carboxamide isomerase.